The following is a 188-amino-acid chain: Adenine phosphoribosyltransferase (188 aa).

Belongs to the purine/pyrimidine phosphoribosyltransferase family. Homodimer.

It localises to the cytoplasm. It catalyses the reaction AMP + diphosphate = 5-phospho-alpha-D-ribose 1-diphosphate + adenine. Its pathway is purine metabolism; AMP biosynthesis via salvage pathway; AMP from adenine: step 1/1. Its function is as follows. Catalyzes a salvage reaction resulting in the formation of AMP, that is energically less costly than de novo synthesis. The sequence is that of Adenine phosphoribosyltransferase from Neisseria meningitidis serogroup C (strain 053442).